A 221-amino-acid polypeptide reads, in one-letter code: Ribosomal RNA small subunit methyltransferase G (221 aa).

Residues Gly-90, Leu-95, 141–142 (VE), and Arg-154 each bind S-adenosyl-L-methionine.

Belongs to the methyltransferase superfamily. RNA methyltransferase RsmG family.

It is found in the cytoplasm. It carries out the reaction guanosine(527) in 16S rRNA + S-adenosyl-L-methionine = N(7)-methylguanosine(527) in 16S rRNA + S-adenosyl-L-homocysteine. Functionally, specifically methylates the N7 position of guanine in position 527 of 16S rRNA. This chain is Ribosomal RNA small subunit methyltransferase G, found in Polaromonas naphthalenivorans (strain CJ2).